Reading from the N-terminus, the 485-residue chain is Cytosol non-specific dipeptidase (485 aa).

Residue His-76 participates in Zn(2+) binding. Residue Asp-78 is part of the active site. Asp-115 contacts Zn(2+). Glu-145 serves as the catalytic Proton acceptor. Residues Glu-146 and Asp-169 each contribute to the Zn(2+) site. Lys-296 carries the post-translational modification N6-acetyllysine. His-457 is a Zn(2+) binding site.

The protein belongs to the peptidase M20C family. Requires Zn(2+) as cofactor. Co(2+) is required as a cofactor.

It carries out the reaction Hydrolysis of dipeptides, preferentially hydrophobic dipeptides including prolyl amino acids.. Its activity is regulated as follows. Inhibited by metal chelators. Its function is as follows. Dipeptidase with broad substrate specificity. Requires dipeptide substrates with an unblocked N-terminus and the amino group in the alpha or beta position. Non-protein amino acids and proline are not accepted in the C-terminal position, whereas some dipeptide amides and formyl amino acids are hydrolyzed. Also shows cysteinylglycinase activity, which is sufficient for E.coli to utilize cysteinylglycine as a cysteine source. In Escherichia coli (strain K12), this protein is Cytosol non-specific dipeptidase (pepD).